Consider the following 258-residue polypeptide: Acetylglutamate kinase (258 aa).

Substrate is bound by residues 44-45, R66, and N158; that span reads GG. Residues 181 to 186 and 209 to 211 each bind ATP; these read DISSIL and IIT.

This sequence belongs to the acetylglutamate kinase family. ArgB subfamily. As to quaternary structure, homodimer.

Its subcellular location is the cytoplasm. It catalyses the reaction N-acetyl-L-glutamate + ATP = N-acetyl-L-glutamyl 5-phosphate + ADP. The protein operates within amino-acid biosynthesis; L-arginine biosynthesis; N(2)-acetyl-L-ornithine from L-glutamate: step 2/4. Its function is as follows. Catalyzes the ATP-dependent phosphorylation of N-acetyl-L-glutamate. The chain is Acetylglutamate kinase from Buchnera aphidicola subsp. Schizaphis graminum (strain Sg).